The primary structure comprises 213 residues: Uridine kinase (213 aa).

15–22 lines the ATP pocket; sequence GASASGKS.

The protein belongs to the uridine kinase family.

It localises to the cytoplasm. It catalyses the reaction uridine + ATP = UMP + ADP + H(+). It carries out the reaction cytidine + ATP = CMP + ADP + H(+). It participates in pyrimidine metabolism; CTP biosynthesis via salvage pathway; CTP from cytidine: step 1/3. Its pathway is pyrimidine metabolism; UMP biosynthesis via salvage pathway; UMP from uridine: step 1/1. In Cronobacter sakazakii (strain ATCC BAA-894) (Enterobacter sakazakii), this protein is Uridine kinase.